A 1872-amino-acid chain; its full sequence is Ral GTPase-activating protein subunit alpha-2 (1872 aa).

The disordered stretch occupies residues 350 to 370 (DGAGSTEQDKSHSNSSTLSDR). Phosphoserine occurs at positions 373, 376, and 379. Basic and acidic residues predominate over residues 445 to 469 (PDKKDVAQEDADKLGLSETDSKEAS). The tract at residues 445-481 (PDKKDVAQEDADKLGLSETDSKEASSESSGHKRSSSW) is disordered. Ser-486 is subject to Phosphoserine. At Ser-696 the chain carries Phosphoserine; by PKB. 2 disordered regions span residues 711 to 730 (FRSATTSGAPGVEKARNTVR) and 758 to 813 (QQVP…GITM). Thr-715 carries the phosphothreonine; by PKB modification. Composition is skewed to polar residues over residues 758–768 (QQVPRSSSTSD) and 775–795 (SDSSQGQKVEHSQNLSSSEPK). Over residues 796-810 (SVQESKGHVTHEHEG) the composition is skewed to basic and acidic residues. Residues Ser-819 and Ser-820 each carry the phosphoserine modification. Residues 831 to 851 (QQAHGRCRQRQTSESTGSDTV) form a disordered region. The segment covering 840 to 849 (RQTSESTGSD) has biased composition (polar residues). Ser-1592 bears the Phosphoserine mark. The Rap-GAP domain occupies 1634-1842 (LKNLDSRQCR…EERALYLEAI (209 aa)).

Component of the heterodimeric RalGAP2 complex with RALGAPB. Heterodimerization is required for activity. In terms of tissue distribution, abundantly expressed in testis, pancreas, lung, thymus, brown fat, and white fat.

Its subcellular location is the cytoplasm. Functionally, catalytic subunit of the heterodimeric RalGAP2 complex which acts as a GTPase activator for the Ras-like small GTPases RALA and RALB. This is Ral GTPase-activating protein subunit alpha-2 (Ralgapa2) from Mus musculus (Mouse).